The sequence spans 302 residues: Sulfate adenylyltransferase subunit 2 (302 aa).

Positions 280 to 302 (RQGRLIDSDQSASMEQKKRQGYF) are disordered.

This sequence belongs to the PAPS reductase family. CysD subfamily. Heterodimer composed of CysD, the smaller subunit, and CysN.

It catalyses the reaction sulfate + ATP + H(+) = adenosine 5'-phosphosulfate + diphosphate. It participates in sulfur metabolism; hydrogen sulfide biosynthesis; sulfite from sulfate: step 1/3. Functionally, with CysN forms the ATP sulfurylase (ATPS) that catalyzes the adenylation of sulfate producing adenosine 5'-phosphosulfate (APS) and diphosphate, the first enzymatic step in sulfur assimilation pathway. APS synthesis involves the formation of a high-energy phosphoric-sulfuric acid anhydride bond driven by GTP hydrolysis by CysN coupled to ATP hydrolysis by CysD. The protein is Sulfate adenylyltransferase subunit 2 of Shewanella baltica (strain OS185).